The chain runs to 318 residues: Putative enoyl-CoA hydratase EchA13 (318 aa).

The disordered stretch occupies residues 90–110; that stretch reads LGSADDIRERSPGPDQHPSYR.

It belongs to the enoyl-CoA hydratase/isomerase family.

The sequence is that of Putative enoyl-CoA hydratase EchA13 (echA13) from Mycobacterium tuberculosis (strain ATCC 25618 / H37Rv).